The following is a 298-amino-acid chain: Apolipoprotein E (298 aa).

The first 18 residues, 1 to 18, serve as a signal peptide directing secretion; the sequence is MKVLWAALVVTLLAGCRA. 8 consecutive repeat copies span residues 74–95, 96–117, 118–139, 140–161, 162–183, 184–204, 205–222, and 223–244. The tract at residues 74–244 is 8 X 22 AA approximate tandem repeats; that stretch reads LLIEDTMKEV…RLEEVREQME (171 aa). Met137 is subject to Methionine sulfoxide. Residue Ser141 is modified to Phosphoserine. An LDL and other lipoprotein receptors binding region spans residues 152–162; that stretch reads HPRKMKRRLQR. 156 to 159 contributes to the heparin binding site; it reads MKRR. A heparin-binding site is contributed by 218 to 225; sequence GEQMRGRL. The tract at residues 260 to 272 is specificity for association with VLDL; the sequence is RLKSWFEPMMEDM.

The protein belongs to the apolipoprotein A1/A4/E family. In terms of assembly, homotetramer. May interact with ABCA1; functionally associated with ABCA1 in the biogenesis of HDLs. May interact with APP/A4 amyloid-beta peptide; the interaction is extremely stable in vitro but its physiological significance is unclear. May interact with MAPT. May interact with MAP2. In the cerebrospinal fluid, interacts with secreted SORL1. Interacts with PMEL; this allows the loading of PMEL luminal fragment on ILVs to induce fibril nucleation. APOE exists as multiple glycosylated and sialylated glycoforms within cells and in plasma. The extent of glycosylation and sialylation are tissue and context specific. Post-translationally, glycated in plasma VLDL. In terms of processing, phosphorylated by FAM20C in the extracellular medium.

Its subcellular location is the secreted. It is found in the extracellular space. It localises to the extracellular matrix. The protein localises to the extracellular vesicle. The protein resides in the endosome. Its subcellular location is the multivesicular body. Functionally, APOE is an apolipoprotein, a protein associating with lipid particles, that mainly functions in lipoprotein-mediated lipid transport between organs via the plasma and interstitial fluids. APOE is a core component of plasma lipoproteins and is involved in their production, conversion and clearance. Apolipoproteins are amphipathic molecules that interact both with lipids of the lipoprotein particle core and the aqueous environment of the plasma. As such, APOE associates with chylomicrons, chylomicron remnants, very low density lipoproteins (VLDL) and intermediate density lipoproteins (IDL) but shows a preferential binding to high-density lipoproteins (HDL). It also binds a wide range of cellular receptors including the LDL receptor/LDLR and the very low-density lipoprotein receptor/VLDLR that mediate the cellular uptake of the APOE-containing lipoprotein particles. Finally, APOE also has a heparin-binding activity and binds heparan-sulfate proteoglycans on the surface of cells, a property that supports the capture and the receptor-mediated uptake of APOE-containing lipoproteins by cells. This Cavia porcellus (Guinea pig) protein is Apolipoprotein E (APOE).